We begin with the raw amino-acid sequence, 802 residues long: Ribosomal protein S6 kinase alpha-5 (802 aa).

Positions 1-22 (MEEEGGSSGGAAGTSADGGDGG) are enriched in gly residues. Residues 1-23 (MEEEGGSSGGAAGTSADGGDGGE) are disordered. Residues 49 to 318 (FELLKVLGTG…ADEIKEHLFF (270 aa)) form the Protein kinase 1 domain. Residues 55-63 (LGTGAYGKV) and Lys81 each bind ATP. Asp177 acts as the Proton acceptor in catalysis. Ser212 is modified (phosphoserine; by autocatalysis). The AGC-kinase C-terminal domain maps to 319–387 (QKINWDDLAA…VAPSILFKRN (69 aa)). Ser360 carries the post-translational modification Phosphoserine; by MAPK1, MAPK3 and MAPK14. 2 positions are modified to phosphoserine; by autocatalysis: Ser376 and Ser381. The Protein kinase 2 domain occupies 426–687 (DLKDKPLGEG…MSGLRYNEWL (262 aa)). Residues 432–440 (LGEGSFSIC) and Lys455 contribute to the ATP site. The active-site Proton acceptor is the Asp544. Thr581 is subject to Phosphothreonine; by MAPK1, MAPK3 and MAPK14. Ser647, Ser657, Ser691, and Ser695 each carry phosphoserine. Thr700 is modified (phosphothreonine; by MAPK1, MAPK3 and MAPK14). Residues 741–802 (AKRRKMKKTS…TLFQFSDSVA (62 aa)) are disordered. Residues 749-779 (TSTSTETRSSSSESSHSSSSHSHGKTTPTKT) are compositionally biased toward low complexity. Phosphoserine; by autocatalysis is present on residues Ser750, Ser752, and Ser758. Over residues 780–802 (LQPSNPADSNNPETLFQFSDSVA) the composition is skewed to polar residues. Position 798 is a phosphoserine (Ser798).

This sequence belongs to the protein kinase superfamily. AGC Ser/Thr protein kinase family. S6 kinase subfamily. Forms a complex with either MAPK1/ERK2 or MAPK3/ERK1 in quiescent cells which transiently dissociates following mitogenic stimulation. Also associates with MAPK14/p38-alpha. Activated RPS6KA5 associates with and phosphorylates the NF-kappa-B p65 subunit RELA. Interacts with CREBBP and EP300. Mg(2+) is required as a cofactor. Post-translationally, ser-376 and Thr-581 phosphorylation is required for kinase activity. Ser-376 and Ser-212 are autophosphorylated by the C-terminal kinase domain, and their phosphorylation is essential for the catalytic activity of the N-terminal kinase domain. Phosphorylated at Ser-360, Thr-581 and Thr-700 by MAPK1/ERK2, MAPK3/ERK1 and MAPK14/p38-alpha. Autophosphorylated at Ser-750, Ser-752 and Ser-758 by the N-terminal kinase domain. Ubiquitinated. In terms of tissue distribution, widely expressed with high levels in heart, brain and placenta. Less abundant in lung, kidney and liver.

The protein localises to the nucleus. Its subcellular location is the cytoplasm. It catalyses the reaction L-seryl-[protein] + ATP = O-phospho-L-seryl-[protein] + ADP + H(+). The catalysed reaction is L-threonyl-[protein] + ATP = O-phospho-L-threonyl-[protein] + ADP + H(+). Activated by phosphorylation at Ser-360, Thr-581 and Thr-700 by MAPK1/ERK2, MAPK3/ERK1 and MAPK14/p38-alpha, and by further autophosphorylation of Ser-212, Ser-376 and Ser-381 by the activated C-terminal kinase domain. The active N-terminal kinase domain finally phosphorylates downstream substrates, as well as Ser-750, Ser-752 and Ser-758 in its own C-terminal region. Its function is as follows. Serine/threonine-protein kinase that is required for the mitogen or stress-induced phosphorylation of the transcription factors CREB1 and ATF1 and for the regulation of the transcription factors RELA, STAT3 and ETV1/ER81, and that contributes to gene activation by histone phosphorylation and functions in the regulation of inflammatory genes. Phosphorylates CREB1 and ATF1 in response to mitogenic or stress stimuli such as UV-C irradiation, epidermal growth factor (EGF) and anisomycin. Plays an essential role in the control of RELA transcriptional activity in response to TNF and upon glucocorticoid, associates in the cytoplasm with the glucocorticoid receptor NR3C1 and contributes to RELA inhibition and repression of inflammatory gene expression. In skeletal myoblasts is required for phosphorylation of RELA at 'Ser-276' during oxidative stress. In erythropoietin-stimulated cells, is necessary for the 'Ser-727' phosphorylation of STAT3 and regulation of its transcriptional potential. Phosphorylates ETV1/ER81 at 'Ser-191' and 'Ser-216', and thereby regulates its ability to stimulate transcription, which may be important during development and breast tumor formation. Directly represses transcription via phosphorylation of 'Ser-1' of histone H2A. Phosphorylates 'Ser-10' of histone H3 in response to mitogenics, stress stimuli and EGF, which results in the transcriptional activation of several immediate early genes, including proto-oncogenes c-fos/FOS and c-jun/JUN. May also phosphorylate 'Ser-28' of histone H3. Mediates the mitogen- and stress-induced phosphorylation of high mobility group protein 1 (HMGN1/HMG14). In lipopolysaccharide-stimulated primary macrophages, acts downstream of the Toll-like receptor TLR4 to limit the production of pro-inflammatory cytokines. Functions probably by inducing transcription of the MAP kinase phosphatase DUSP1 and the anti-inflammatory cytokine interleukin 10 (IL10), via CREB1 and ATF1 transcription factors. Plays a role in neuronal cell death by mediating the downstream effects of excitotoxic injury. Phosphorylates TRIM7 at 'Ser-107' in response to growth factor signaling via the MEK/ERK pathway, thereby stimulating its ubiquitin ligase activity. This chain is Ribosomal protein S6 kinase alpha-5 (RPS6KA5), found in Homo sapiens (Human).